The chain runs to 458 residues: Elongation factor 1-alpha 1 (458 aa).

Glycine 2 is modified (n,N,N-trimethylglycine). N6,N6-dimethyllysine; alternate is present on lysine 3. N6-methyllysine; alternate is present on lysine 3. Positions 5 to 240 (KTHVNVVVIG…DAIEPPTRPT (236 aa)) constitute a tr-type G domain. Residues 14–21 (GHVDSGKS) form a G1 region. 14-21 (GHVDSGKS) contributes to the GTP binding site. N6-methyllysine is present on lysine 30. Positions 70-74 (GITID) are G2. The residue at position 79 (lysine 79) is an N6,N6,N6-trimethyllysine. The G3 stretch occupies residues 91 to 94 (DAPG). GTP contacts are provided by residues 91–95 (DAPGH) and 153–156 (NKMD). Positions 153–156 (NKMD) are G4. The segment at 192 to 194 (SGW) is G5. Residue lysine 316 is modified to N6,N6-dimethyllysine; alternate. Residue lysine 316 is modified to N6-methyllysine; alternate. The residue at position 390 (lysine 390) is an N6-methyllysine.

The protein belongs to the TRAFAC class translation factor GTPase superfamily. Classic translation factor GTPase family. EF-Tu/EF-1A subfamily.

It localises to the cytoplasm. In terms of biological role, this protein promotes the GTP-dependent binding of aminoacyl-tRNA to the A-site of ribosomes during protein biosynthesis. The sequence is that of Elongation factor 1-alpha 1 (TEF1) from Candida albicans (strain SC5314 / ATCC MYA-2876) (Yeast).